The chain runs to 227 residues: Phosphatidylethanolamine-binding protein 4 (227 aa).

An N-terminal signal peptide occupies residues Met-1 to Gly-22. N-linked (GlcNAc...) (complex) asparagine glycosylation is present at Asn-169. The important for secretion stretch occupies residues Glu-188–Cys-227. A disordered region spans residues Asp-202–Cys-227. The segment covering Pro-209–Gln-221 has biased composition (basic and acidic residues).

The protein belongs to the phosphatidylethanolamine-binding protein family.

It localises to the secreted. Functionally, promotes AKT phosphorylation, suggesting a possible role in the PI3K-AKT signaling pathway. This is Phosphatidylethanolamine-binding protein 4 (PEBP4) from Homo sapiens (Human).